We begin with the raw amino-acid sequence, 64 residues long: uncharacterized protein (64 aa).

The chain crosses the membrane as a helical span at residues 30–52; that stretch reads FYAIFEMLFWPLVSLISVGLLGE.

Its subcellular location is the membrane. This is an uncharacterized protein from Archaeoglobus fulgidus (strain ATCC 49558 / DSM 4304 / JCM 9628 / NBRC 100126 / VC-16).